A 237-amino-acid chain; its full sequence is Ribosomal RNA small subunit methyltransferase G (237 aa).

Residues Gly-78, Phe-83, 129 to 130 (AE), and Arg-148 contribute to the S-adenosyl-L-methionine site. A disordered region spans residues 216–237 (SKKKETPNKYPRKAGTPNKKPL).

It belongs to the methyltransferase superfamily. RNA methyltransferase RsmG family.

It localises to the cytoplasm. Its function is as follows. Specifically methylates the N7 position of a guanine in 16S rRNA. The polypeptide is Ribosomal RNA small subunit methyltransferase G (Streptococcus agalactiae serotype Ia (strain ATCC 27591 / A909 / CDC SS700)).